A 414-amino-acid polypeptide reads, in one-letter code: Lipoyl synthase, mitochondrial (414 aa).

A mitochondrion-targeting transit peptide spans methionine 1–tyrosine 31. Residues tyrosine 31–arginine 51 are disordered. A compositionally biased stretch (low complexity) spans alanine 32–threonine 48. [4Fe-4S] cluster-binding residues include cysteine 131, cysteine 136, cysteine 142, cysteine 162, cysteine 166, cysteine 169, and serine 377. In terms of domain architecture, Radical SAM core spans glycine 145–leucine 366.

Belongs to the radical SAM superfamily. Lipoyl synthase family. [4Fe-4S] cluster serves as cofactor.

It is found in the mitochondrion. It catalyses the reaction [[Fe-S] cluster scaffold protein carrying a second [4Fe-4S](2+) cluster] + N(6)-octanoyl-L-lysyl-[protein] + 2 oxidized [2Fe-2S]-[ferredoxin] + 2 S-adenosyl-L-methionine + 4 H(+) = [[Fe-S] cluster scaffold protein] + N(6)-[(R)-dihydrolipoyl]-L-lysyl-[protein] + 4 Fe(3+) + 2 hydrogen sulfide + 2 5'-deoxyadenosine + 2 L-methionine + 2 reduced [2Fe-2S]-[ferredoxin]. It participates in protein modification; protein lipoylation via endogenous pathway; protein N(6)-(lipoyl)lysine from octanoyl-[acyl-carrier-protein]: step 2/2. Catalyzes the radical-mediated insertion of two sulfur atoms into the C-6 and C-8 positions of the octanoyl moiety bound to the lipoyl domains of lipoate-dependent enzymes, thereby converting the octanoylated domains into lipoylated derivatives. The sequence is that of Lipoyl synthase, mitochondrial from Aspergillus fumigatus (strain CBS 144.89 / FGSC A1163 / CEA10) (Neosartorya fumigata).